Consider the following 111-residue polypeptide: UPF0122 protein YofM (111 aa).

Belongs to the UPF0122 family.

Functionally, might take part in the signal recognition particle (SRP) pathway. This is inferred from the conservation of its genetic proximity to ftsY/ffh. May be a regulatory protein. The polypeptide is UPF0122 protein YofM (yofM) (Lactococcus lactis subsp. lactis (strain IL1403) (Streptococcus lactis)).